The following is a 482-amino-acid chain: Class E basic helix-loop-helix protein 41 (482 aa).

Lysine 31 participates in a covalent cross-link: Glycyl lysine isopeptide (Lys-Gly) (interchain with G-Cter in SUMO2). Positions 44-99 (TYKLPHRLIEKKRRDRINECIAQLKDLLPEHLKLTTLGHLEKAVVLELTLKHLKAL) constitute a bHLH domain. The tract at residues 67–71 (LKDLL) is necessary for interaction with RXRA and repressor activity towards RXRA. Lysine 121 participates in a covalent cross-link: Glycyl lysine isopeptide (Lys-Gly) (interchain with G-Cter in SUMO2). Residues 131–166 (FHSGFQTCAKEVLQYLSRFESWTPREPRCVQLINHL) enclose the Orange domain. Lysine 210 is covalently cross-linked (Glycyl lysine isopeptide (Lys-Gly) (interchain with G-Cter in SUMO2)). Disordered regions lie at residues 228-298 (AELA…GGAA) and 438-482 (VAPL…KEAP). A compositionally biased stretch (basic and acidic residues) spans 246–256 (AEARPDREKGK). Lysine 266 participates in a covalent cross-link: Glycyl lysine isopeptide (Lys-Gly) (interchain with G-Cter in SUMO2). The span at 285–297 (RGGGSGGGPGGGA) shows a compositional bias: gly residues.

Homodimer. Heterodimer with BHLHE40/DEC1. Interacts with CIART and BMAL1. Interacts with RXRA. Interacts with NR0B2 and HNF1A. In terms of tissue distribution, highly expressed in skeletal muscle and brain, moderately expressed in pancreas and heart, weakly expressed in placenta, lung, liver and kidney.

It localises to the nucleus. Transcriptional repressor involved in the regulation of the circadian rhythm by negatively regulating the activity of the clock genes and clock-controlled genes. Acts as the negative limb of a novel autoregulatory feedback loop (DEC loop) which differs from the one formed by the PER and CRY transcriptional repressors (PER/CRY loop). Both these loops are interlocked as it represses the expression of PER1 and in turn is repressed by PER1/2 and CRY1/2. Represses the activity of the circadian transcriptional activator: CLOCK-BMAL1 heterodimer by competing for the binding to E-box elements (5'-CACGTG-3') found within the promoters of its target genes. Negatively regulates its own expression and the expression of DBP and BHLHE41/DEC2. Acts as a corepressor of RXR and the RXR-LXR heterodimers and represses the ligand-induced RXRA/B/G, NR1H3/LXRA, NR1H4 and VDR transactivation activity. Inhibits HNF1A-mediated transactivation of CYP1A2, CYP2E1 AND CYP3A11. In Homo sapiens (Human), this protein is Class E basic helix-loop-helix protein 41.